The chain runs to 557 residues: NADP-dependent malic enzyme (557 aa).

Y88 (proton donor) is an active-site residue. R141 contacts NADP(+). Catalysis depends on K159, which acts as the Proton acceptor. The a divalent metal cation site is built by E231, D232, and D255. D255 is an NADP(+) binding site. Position 322 is a phosphoserine (S322). N394 is a binding site for NADP(+).

Belongs to the malic enzymes family. Homotetramer. Mg(2+) serves as cofactor. It depends on Mn(2+) as a cofactor.

The protein resides in the cytoplasm. The enzyme catalyses (S)-malate + NADP(+) = pyruvate + CO2 + NADPH. It carries out the reaction oxaloacetate + H(+) = pyruvate + CO2. Its function is as follows. Catalyzes the oxidative decarboxylation of (S)-malate in the presence of NADP(+) and divalent metal ions, and decarboxylation of oxaloacetate. This chain is NADP-dependent malic enzyme (ME1), found in Sus scrofa (Pig).